Reading from the N-terminus, the 251-residue chain is Hydroxyacylglutathione hydrolase (251 aa).

Positions 53, 55, 57, 58, 110, 127, and 165 each coordinate Zn(2+).

The protein belongs to the metallo-beta-lactamase superfamily. Glyoxalase II family. As to quaternary structure, monomer. The cofactor is Zn(2+).

The catalysed reaction is an S-(2-hydroxyacyl)glutathione + H2O = a 2-hydroxy carboxylate + glutathione + H(+). Its pathway is secondary metabolite metabolism; methylglyoxal degradation; (R)-lactate from methylglyoxal: step 2/2. Functionally, thiolesterase that catalyzes the hydrolysis of S-D-lactoyl-glutathione to form glutathione and D-lactic acid. The chain is Hydroxyacylglutathione hydrolase from Pectobacterium atrosepticum (strain SCRI 1043 / ATCC BAA-672) (Erwinia carotovora subsp. atroseptica).